A 417-amino-acid chain; its full sequence is Riboflavin biosynthesis protein RibBA (417 aa).

The segment at 1–204 (MTRLDSIERA…IADLIEWRRK (204 aa)) is DHBP synthase. D-ribulose 5-phosphate is bound by residues 28–29 (RE), aspartate 33, 141–145 (RPGHT), and glutamate 165. Residue glutamate 29 coordinates Mg(2+). Histidine 144 lines the Mg(2+) pocket. The interval 205–417 (HEKHVQRIAE…LDDHPEADGA (213 aa)) is GTP cyclohydrolase II. Residue 259–263 (RVHSE) participates in GTP binding. Zn(2+) contacts are provided by cysteine 264, cysteine 275, and cysteine 277. Residues glutamine 280, 303–305 (EGR), and threonine 325 contribute to the GTP site. Residue aspartate 337 is the Proton acceptor; for GTP cyclohydrolase activity of the active site. The active-site Nucleophile; for GTP cyclohydrolase activity is arginine 339. The GTP site is built by threonine 360 and lysine 365.

It in the N-terminal section; belongs to the DHBP synthase family. This sequence in the C-terminal section; belongs to the GTP cyclohydrolase II family. Mg(2+) serves as cofactor. Requires Mn(2+) as cofactor. It depends on Zn(2+) as a cofactor.

It catalyses the reaction D-ribulose 5-phosphate = (2S)-2-hydroxy-3-oxobutyl phosphate + formate + H(+). The catalysed reaction is GTP + 4 H2O = 2,5-diamino-6-hydroxy-4-(5-phosphoribosylamino)-pyrimidine + formate + 2 phosphate + 3 H(+). Its pathway is cofactor biosynthesis; riboflavin biosynthesis; 2-hydroxy-3-oxobutyl phosphate from D-ribulose 5-phosphate: step 1/1. It participates in cofactor biosynthesis; riboflavin biosynthesis; 5-amino-6-(D-ribitylamino)uracil from GTP: step 1/4. Catalyzes the conversion of D-ribulose 5-phosphate to formate and 3,4-dihydroxy-2-butanone 4-phosphate. Its function is as follows. Catalyzes the conversion of GTP to 2,5-diamino-6-ribosylamino-4(3H)-pyrimidinone 5'-phosphate (DARP), formate and pyrophosphate. The chain is Riboflavin biosynthesis protein RibBA from Mycobacteroides abscessus (strain ATCC 19977 / DSM 44196 / CCUG 20993 / CIP 104536 / JCM 13569 / NCTC 13031 / TMC 1543 / L948) (Mycobacterium abscessus).